A 251-amino-acid polypeptide reads, in one-letter code: uncharacterized protein (251 aa).

A divalent metal cation is bound by residues H6, H8, E90, H130, H154, and D202.

This sequence belongs to the metallo-dependent hydrolases superfamily. TatD-type hydrolase family. Requires a divalent metal cation as cofactor.

This is an uncharacterized protein from Haemophilus influenzae (strain ATCC 51907 / DSM 11121 / KW20 / Rd).